Consider the following 348-residue polypeptide: Neuronal growth regulator 1 (348 aa).

Residues 1–31 (MVLLAQGACCSNQWLAAVLLSLCSCLPAGQS) form the signal peptide. Ig-like C2-type domains lie at 32 to 128 (VDFP…VHLT), 133 to 215 (PKIY…RVIV), and 219 to 307 (PTIQ…LPLN). Cysteines 54 and 112 form a disulfide. N-linked (GlcNAc...) asparagine glycans are attached at residues N67 and N149. 2 cysteine pairs are disulfide-bonded: C154-C197 and C239-C291. Y181 bears the Phosphotyrosine mark. N269, N280, N288, and N301 each carry an N-linked (GlcNAc...) asparagine glycan. G318 carries GPI-anchor amidated glycine lipidation. Positions 319-348 (SACDLFSCWSLALTLSSVISIFYLKNAILQ) are cleaved as a propeptide — removed in mature form.

The protein belongs to the immunoglobulin superfamily. IgLON family. Expressed in brain.

The protein resides in the cell membrane. May be involved in cell-adhesion. May function as a trans-neural growth-promoting factor in regenerative axon sprouting in the mammalian brain. This is Neuronal growth regulator 1 (Negr1) from Mus musculus (Mouse).